Here is a 100-residue protein sequence, read N- to C-terminus: Cell division protein FtsB (100 aa).

Residues 1-3 (MKW) are Cytoplasmic-facing. Residues 4–21 (LAIILVVALLALQYRLWM) traverse the membrane as a helical segment. Residues 22-100 (GEGSIASVVS…TDKDTKKNKK (79 aa)) lie on the Periplasmic side of the membrane. Residues 26–73 (IASVVSLNREIAKQKEENARLRERNRLLAAEVDALKQGKDAIEERARN) are a coiled coil.

This sequence belongs to the FtsB family. As to quaternary structure, part of a complex composed of FtsB, FtsL and FtsQ.

Its subcellular location is the cell inner membrane. Functionally, essential cell division protein. May link together the upstream cell division proteins, which are predominantly cytoplasmic, with the downstream cell division proteins, which are predominantly periplasmic. In Saccharophagus degradans (strain 2-40 / ATCC 43961 / DSM 17024), this protein is Cell division protein FtsB.